The chain runs to 927 residues: Perchlorate reductase subunit alpha (927 aa).

The tat-type signal signal peptide spans 1–31; it reads MVQMTRRGFLLASGATLLGSSLSFRTLAAAA. Positions 53 to 116 constitute a 4Fe-4S Mo/W bis-MGD-type domain; it reads DKKTRGAHLI…CAHDYMYGPH (64 aa). [4Fe-4S] cluster contacts are provided by His60, Cys64, Cys68, and Cys102. A Mo-bis(molybdopterin guanine dinucleotide)-binding site is contributed by Asp198.

This sequence belongs to the prokaryotic molybdopterin-containing oxidoreductase family. In terms of assembly, heterotrimer of alpha, beta and gamma subunits. [4Fe-4S] cluster is required as a cofactor. The cofactor is Mo-bis(molybdopterin guanine dinucleotide). In terms of processing, predicted to be exported by the Tat system. The position of the signal peptide cleavage has not been experimentally proven.

It is found in the periplasm. Its function is as follows. Component of the perchlorate reductase that catalyzes the reduction of perchlorate to chlorite and allows anaerobic growth on perchlorate as the sole electron acceptor. Is probably also able to reduce chlorate to chlorite. The alpha subunit is likely the catalytic subunit. The chain is Perchlorate reductase subunit alpha (pcrA) from Dechloromonas aromatica (strain RCB).